Consider the following 864-residue polypeptide: Leucine--tRNA ligase (864 aa).

The 'HIGH' region motif lies at proline 50 to histidine 60. The short motif at lysine 622–serine 626 is the 'KMSKS' region element. Lysine 625 contributes to the ATP binding site.

The protein belongs to the class-I aminoacyl-tRNA synthetase family.

It localises to the cytoplasm. It carries out the reaction tRNA(Leu) + L-leucine + ATP = L-leucyl-tRNA(Leu) + AMP + diphosphate. The chain is Leucine--tRNA ligase from Acidiphilium cryptum (strain JF-5).